The following is a 306-amino-acid chain: Tyrosine recombinase XerC (306 aa).

The 85-residue stretch at 1-85 (MQQQLEQFLA…AIKSFFEYLQ (85 aa)) folds into the Core-binding (CB) domain. Residues 106-289 (FLPKAITVAQ…SNDRAVKYDQ (184 aa)) form the Tyr recombinase domain. Catalysis depends on residues Arg-147, Lys-171, His-241, Arg-244, and His-267. The O-(3'-phospho-DNA)-tyrosine intermediate role is filled by Tyr-276.

This sequence belongs to the 'phage' integrase family. XerC subfamily. As to quaternary structure, forms a cyclic heterotetrameric complex composed of two molecules of XerC and two molecules of XerD.

The protein resides in the cytoplasm. Its function is as follows. Site-specific tyrosine recombinase, which acts by catalyzing the cutting and rejoining of the recombining DNA molecules. The XerC-XerD complex is essential to convert dimers of the bacterial chromosome into monomers to permit their segregation at cell division. It also contributes to the segregational stability of plasmids. This chain is Tyrosine recombinase XerC, found in Herpetosiphon aurantiacus (strain ATCC 23779 / DSM 785 / 114-95).